Reading from the N-terminus, the 268-residue chain is Hydroxyethylthiazole kinase (268 aa).

Met45 serves as a coordination point for substrate. Arg121 and Thr167 together coordinate ATP. A substrate-binding site is contributed by Gly194.

The protein belongs to the Thz kinase family. Requires Mg(2+) as cofactor.

It carries out the reaction 5-(2-hydroxyethyl)-4-methylthiazole + ATP = 4-methyl-5-(2-phosphooxyethyl)-thiazole + ADP + H(+). Its pathway is cofactor biosynthesis; thiamine diphosphate biosynthesis; 4-methyl-5-(2-phosphoethyl)-thiazole from 5-(2-hydroxyethyl)-4-methylthiazole: step 1/1. Functionally, catalyzes the phosphorylation of the hydroxyl group of 4-methyl-5-beta-hydroxyethylthiazole (THZ). The sequence is that of Hydroxyethylthiazole kinase from Bacillus anthracis (strain A0248).